A 173-amino-acid chain; its full sequence is Alpha-crystallin A chain (173 aa).

Position 1 is an N-acetylmethionine (methionine 1). The tract at residues 1–63 is required for complex formation with BFSP1 and BFSP2; the sequence is MDVTIQHPWF…RTVLDSGISE (63 aa). The residue at position 6 (glutamine 6) is a Deamidated glutamine; partial. Serine 45 carries the post-translational modification Phosphoserine. A Deamidated glutamine; partial modification is found at glutamine 50. Positions 52 to 162 constitute a sHSP domain; sequence LFRTVLDSGI…SHSERAIPVS (111 aa). N6-acetyllysine is present on lysine 99. Histidine 100 is a Zn(2+) binding site. Asparagine 101 is modified (deamidated asparagine; partial). Residues glutamate 102 and histidine 107 each contribute to the Zn(2+) site. Phosphoserine is present on serine 122. Asparagine 123 carries the deamidated asparagine; partial modification. A disulfide bridge links cysteine 131 with cysteine 142. Glutamine 147 carries the deamidated glutamine; partial modification. Positions 147-173 are disordered; sequence QSGMDASHSERAIPVSREEKPSSAPSS. Over residues 153 to 167 the composition is skewed to basic and acidic residues; that stretch reads SHSERAIPVSREEKP. Residue histidine 154 participates in Zn(2+) binding. O-linked (GlcNAc) serine glycosylation is present at serine 162.

It belongs to the small heat shock protein (HSP20) family. Heteromer composed of three CRYAA and one CRYAB subunits. Inter-subunit bridging via zinc ions enhances stability, which is crucial as there is no protein turn over in the lens. Can also form homodimers and homotetramers (dimers of dimers) which serve as the building blocks of homooligomers. Within homooligomers, the zinc-binding motif is created from residues of 3 different molecules. His-100 and Glu-102 from one molecule are ligands of the zinc ion, and His-107 and His-154 residues from additional molecules complete the site with tetrahedral coordination geometry. Part of a complex required for lens intermediate filament formation composed of BFSP1, BFSP2 and CRYAA. Undergoes age-dependent proteolytical cleavage at the C-terminus.

The protein localises to the cytoplasm. Its subcellular location is the nucleus. Functionally, contributes to the transparency and refractive index of the lens. In its oxidized form (absence of intramolecular disulfide bond), acts as a chaperone, preventing aggregation of various proteins under a wide range of stress conditions. Required for the correct formation of lens intermediate filaments as part of a complex composed of BFSP1, BFSP2 and CRYAA. The chain is Alpha-crystallin A chain (CRYAA) from Procavia capensis (Rock hyrax).